The sequence spans 141 residues: Large ribosomal subunit protein uL11 (141 aa).

Belongs to the universal ribosomal protein uL11 family. In terms of assembly, part of the ribosomal stalk of the 50S ribosomal subunit. Interacts with L10 and the large rRNA to form the base of the stalk. L10 forms an elongated spine to which L12 dimers bind in a sequential fashion forming a multimeric L10(L12)X complex. One or more lysine residues are methylated.

In terms of biological role, forms part of the ribosomal stalk which helps the ribosome interact with GTP-bound translation factors. This is Large ribosomal subunit protein uL11 from Helicobacter pylori (strain P12).